A 2517-amino-acid polypeptide reads, in one-letter code: Cullin-9 (2517 aa).

Lys87 is covalently cross-linked (Glycyl lysine isopeptide (Lys-Gly) (interchain with G-Cter in ubiquitin)). The span at 276–288 (SPELGAGDQSSPC) shows a compositional bias: polar residues. The tract at residues 276–296 (SPELGAGDQSSPCATREKSRG) is disordered. One can recognise a CPH domain in the interval 366-439 (RSEFSSRSGY…HWHMLEILGP (74 aa)). The segment covering 576–589 (SNEPSSSSTSRNHS) has biased composition (low complexity). Residues 576-639 (SNEPSSSSTS…TETPMAQSDS (64 aa)) are disordered. Residues 593 to 609 (DPEEESKSEASFSEEET) show a composition bias toward acidic residues. Residues 610 to 630 (ESLKAKAEAPKTEAEPTKTRT) show a composition bias toward basic and acidic residues. Ser976 carries the phosphoserine modification. Residues 1143–1322 (PINIPFFDVF…RTCLFYTIRA (180 aa)) enclose the DOC domain. Position 1363-1370 (1363-1370 (AAQALGKT)) interacts with ATP. 2 disordered regions span residues 1432-1466 (VEPPPGPSPEPSTRPFSKNSKGRDRSPAPSPVLPS) and 1664-1685 (DEEEKRLEEEEEEEEEEEAEKE). Residues 1433–1443 (EPPPGPSPEPS) are compositionally biased toward pro residues. At Ser1457 the chain carries Phosphoserine. Residues 1649 to 1691 (LFQLQRLDKLFLEQEDEEEKRLEEEEEEEEEEEAEKELFIEDP) are a coiled coil. Acidic residues predominate over residues 1664–1683 (DEEEKRLEEEEEEEEEEEAE). Lys1881 participates in a covalent cross-link: Glycyl lysine isopeptide (Lys-Gly) (interchain with G-Cter in NEDD8). The interval 2066-2283 (RPDHCPVCVS…KDYYNCSAMV (218 aa)) is TRIAD supradomain. Cys2070, Cys2073, Cys2088, His2090, Cys2093, Cys2096, Cys2115, Cys2120, Cys2160, Cys2166, Cys2181, Cys2184, Cys2189, Cys2192, His2198, Cys2203, Cys2236, and Cys2239 together coordinate Zn(2+). Residues 2070-2120 (CPVCVSPLGCDDDLPSLCCMHYCCKSCWNEYLTTRIEQNLVLNCTCPIADC) form an RING-type 1 zinc finger. The IBR-type zinc-finger motif lies at 2140 to 2203 (SKYEKALLRG…FPEAHYPASC (64 aa)). The RING-type 2; atypical zinc-finger motif lies at 2236–2265 (CPSCQAPIEKNEGCLHMTCAKCNHGFCWRC). Cys2249 is a catalytic residue. Zn(2+) contacts are provided by Cys2254, Cys2257, Cys2262, Cys2265, His2273, and Cys2279. A coiled-coil region spans residues 2365 to 2385 (VEQQTENLELHTNALQILLEE). Ser2436 is subject to Phosphoserine. The segment at 2442–2517 (WEAKGPNMPG…EEEDEDEAYD (76 aa)) is disordered. 2 stretches are compositionally biased toward acidic residues: residues 2461 to 2499 (EAEEEEEDDEDDVPEWQQDEFDEELDNDSFSYDESENLD) and 2506 to 2517 (GDEEEDEDEAYD).

It belongs to the cullin family. As to quaternary structure, component of the Cul9-RING complex consisting of CUL9 and RBX1; the CUL9-RBX1 complex is a heterododecamer composed of six CUL9 and six RBX1 protomers. Interacts (via C-terminal TRIAD/RBR supradomain) with E2 ubiquitin-conjugating enzyme UBE2L3. Interacts with CUL7; the interaction with the CUL7 component of the 3M complex leads to inhibition of CUL9 activity. The CUL7-CUL9 heterodimer seems to interact specifically with TP53, likely via the CPH domain. Forms a complex with p53/TP53 in the cytoplasm of unstressed cells. Interacts with UBCH7 and UBCH8. Post-translationally, autoubiquitinated by the CUL9-RBX1 complex at Lys-87. Neddylated. Neddylation is mediated by E1 enzyme UBA3-NAE1 complex and E2 enzyme UBE2F. Structural rearrangment of the C-terminal TRIAD/RBR supradomain may play a role in neddylation and deneddylation. In terms of tissue distribution, ubiquitously expressed in all tissues with highest expression in testis brain and kidney.

It is found in the cytoplasm. Functionally, core component of a Cul9-RING ubiquitin-protein ligase complex composed of CUL9 and RBX1. The CUL9-RBX1 complex mediates ubiquitination and subsequent degradation of BIRC5 and is required to maintain microtubule dynamics and genome integrity. Acts downstream of the 3M complex, which inhibits the ubiquitination of BIRC5. The CUL9-RBX1 complex also mediates mono-ubiquitination of p53/TP53. Acts as a cytoplasmic anchor protein in p53/TP53-associated protein complex. Regulates the subcellular localization of p53/TP53 and its subsequent function. Ubiquitinates apurinic/apyrimidinic endodeoxyribonuclease APEX2. Ubiquitination by the CUL9-RBX1 complex is predominantly mediated by E2 ubiquitin-conjugating enzymes UBE2L3 and UBE2D2. In Homo sapiens (Human), this protein is Cullin-9 (CUL9).